The following is a 243-amino-acid chain: UPF0502 protein Rmet_3697 (243 aa).

The span at 1–11 (MTDTPDTPDTP) shows a compositional bias: low complexity. A disordered region spans residues 1-23 (MTDTPDTPDTPMATGASSRPPLR).

This sequence belongs to the UPF0502 family.

This is UPF0502 protein Rmet_3697 from Cupriavidus metallidurans (strain ATCC 43123 / DSM 2839 / NBRC 102507 / CH34) (Ralstonia metallidurans).